We begin with the raw amino-acid sequence, 751 residues long: ABC transporter G family member 22 (751 aa).

The tract at residues 26 to 81 is disordered; sequence ADIRSPHGSMDANGVPATAPAAVGGGGTLSRKSSRRLMGMSPGRSSGAGTHIRKSR. An ABC transporter domain is found at 157 to 403; it reads LKFRDVTYKV…FSSIGCSPLI (247 aa). An ATP-binding site is contributed by 197-204; that stretch reads GPSGSGKT. The ABC transmembrane type-2 domain maps to 498-707; it reads EQYCILFCRG…TYKLLLKVQY (210 aa). A run of 6 helical transmembrane segments spans residues 516-536, 552-572, 602-622, 634-654, 666-686, and 722-742; these read FSWLRVTQVLSTAVILGLLWW, LLFFIAVFWGFFPVFTAIFAF, LPLDFILPSLFLLVVYFMTGL, LTVFLCIIAAQGLGLAIGAIL, VTVMTFMLAGGFFVKKVPVFI, and GLTEVAALVVMIFGYRLLAYL.

Belongs to the ABC transporter superfamily. ABCG family. Eye pigment precursor importer (TC 3.A.1.204) subfamily.

Its subcellular location is the membrane. This is ABC transporter G family member 22 (ABCG22) from Arabidopsis thaliana (Mouse-ear cress).